The following is a 102-amino-acid chain: UPF0213 protein Ent638_3592 (102 aa).

Residues V4–R79 form the GIY-YIG domain.

This sequence belongs to the UPF0213 family.

In Enterobacter sp. (strain 638), this protein is UPF0213 protein Ent638_3592.